Consider the following 471-residue polypeptide: tRNA-2-methylthio-N(6)-dimethylallyladenosine synthase (471 aa).

The 118-residue stretch at 29–146 folds into the MTTase N-terminal domain; the sequence is KKFHIKTYGC…LPELIAKVNR (118 aa). Residues C38, C74, C109, C187, C191, and C194 each coordinate [4Fe-4S] cluster. Residues 173–405 enclose the Radical SAM core domain; that stretch reads RVPQSSAFLS…QQLLKEKQLE (233 aa). A TRAM domain is found at 408 to 467; sequence KKMIGKTVTVLFDKKHPDKISGRTEYMQQVFSDDSNLLDKIVTMRVEDASTFTLKCTAED.

The protein belongs to the methylthiotransferase family. MiaB subfamily. Monomer. [4Fe-4S] cluster is required as a cofactor.

The protein localises to the cytoplasm. The enzyme catalyses N(6)-dimethylallyladenosine(37) in tRNA + (sulfur carrier)-SH + AH2 + 2 S-adenosyl-L-methionine = 2-methylsulfanyl-N(6)-dimethylallyladenosine(37) in tRNA + (sulfur carrier)-H + 5'-deoxyadenosine + L-methionine + A + S-adenosyl-L-homocysteine + 2 H(+). Catalyzes the methylthiolation of N6-(dimethylallyl)adenosine (i(6)A), leading to the formation of 2-methylthio-N6-(dimethylallyl)adenosine (ms(2)i(6)A) at position 37 in tRNAs that read codons beginning with uridine. This chain is tRNA-2-methylthio-N(6)-dimethylallyladenosine synthase, found in Neorickettsia sennetsu (strain ATCC VR-367 / Miyayama) (Ehrlichia sennetsu).